The chain runs to 273 residues: Thiazole synthase (273 aa).

The active-site Schiff-base intermediate with DXP is lysine 110. 1-deoxy-D-xylulose 5-phosphate-binding positions include glycine 171, 198–199 (AG), and 220–221 (NS).

The protein belongs to the ThiG family. As to quaternary structure, homotetramer. Forms heterodimers with either ThiH or ThiS.

Its subcellular location is the cytoplasm. It catalyses the reaction [ThiS sulfur-carrier protein]-C-terminal-Gly-aminoethanethioate + 2-iminoacetate + 1-deoxy-D-xylulose 5-phosphate = [ThiS sulfur-carrier protein]-C-terminal Gly-Gly + 2-[(2R,5Z)-2-carboxy-4-methylthiazol-5(2H)-ylidene]ethyl phosphate + 2 H2O + H(+). Its pathway is cofactor biosynthesis; thiamine diphosphate biosynthesis. Functionally, catalyzes the rearrangement of 1-deoxy-D-xylulose 5-phosphate (DXP) to produce the thiazole phosphate moiety of thiamine. Sulfur is provided by the thiocarboxylate moiety of the carrier protein ThiS. In vitro, sulfur can be provided by H(2)S. This chain is Thiazole synthase, found in Hydrogenovibrio crunogenus (strain DSM 25203 / XCL-2) (Thiomicrospira crunogena).